A 130-amino-acid polypeptide reads, in one-letter code: Small ribosomal subunit protein uS11 (130 aa).

It belongs to the universal ribosomal protein uS11 family. As to quaternary structure, part of the 30S ribosomal subunit. Interacts with proteins S7 and S18. Binds to IF-3.

Its function is as follows. Located on the platform of the 30S subunit, it bridges several disparate RNA helices of the 16S rRNA. Forms part of the Shine-Dalgarno cleft in the 70S ribosome. The sequence is that of Small ribosomal subunit protein uS11 from Syntrophobacter fumaroxidans (strain DSM 10017 / MPOB).